The sequence spans 22 residues: Mu-conotoxin SxIIIA (22 aa).

3 disulfide bridges follow: cysteine 2-cysteine 15, cysteine 3-cysteine 20, and cysteine 10-cysteine 21. At alanine 22 the chain carries Alanine amide.

Belongs to the conotoxin M superfamily. As to expression, expressed by the venom duct.

It localises to the secreted. In terms of biological role, mu-conotoxins block voltage-gated sodium channels (Nav). This synthetic toxin potently blocks rNav1.4/SCN4A (IC(50)= 7 nM). It also moderately blocks rNav1.1/SCN1A (IC(50)=370 nM), rNav1.2/SCN2A (IC(50)=1 uM), and mNav1.6/SCN6A (IC(50)=570 nM). It is noteworthy that coexpression of subunits beta-2 or beta-4 (but not beta-1 or beta-3) decrease by more that 10-fold the binding potency of the toxin to rNav1.6. It is also noteworthy that the toxin is 50-fold more potent on mouse Nav1.6 than on rat Nav1.6. In vivo, when injected intraperitoneally or subcutaneously in mice, causes motor impairment, paralysis and death. The protein is Mu-conotoxin SxIIIA of Conus striolatus (Cone snail).